Here is a 747-residue protein sequence, read N- to C-terminus: Cyclic di-GMP phosphodiesterase PdeF (747 aa).

Topologically, residues 1–14 (MKLNATYIKIRDKW) are periplasmic. The helical transmembrane segment at 15–36 (WGLPLFLPSLILPIFAHINTFA) threads the bilayer. The Cytoplasmic segment spans residues 37–42 (HISSGE). Residues 43-65 (VFLFYLPLALMISMMMFFSWAAL) traverse the membrane as a helical segment. Residues 66–79 (PGIALGIFVRKYAE) are Periplasmic-facing. Residues 80–102 (LGFYETLSLTANFIIIIILCWGG) traverse the membrane as a helical segment. At 103-128 (YRVFTPRRNNVSHGDTRLISQRIFWQ) the chain is on the cytoplasmic side. Residues 129–151 (IVFPATLFLILFQFAAFVGLLAS) form a helical membrane-spanning segment. The Periplasmic segment spans residues 152–165 (RENLVGVMPFNLGT). Residues 166–188 (LINYQALLVGNLIGVPLCYFIIR) form a helical membrane-spanning segment. Residues 189-215 (VVRNPFYLRSYYSQLKQQVDAKVTKKE) lie on the Cytoplasmic side of the membrane. The helical transmembrane segment at 216-235 (FALWLLALGALLLLLCMPLN) threads the bilayer. Residues 236–239 (EKST) lie on the Periplasmic side of the membrane. Residues 240-259 (IFSTNYTLSLLLPLMMWGAM) form a helical membrane-spanning segment. Topologically, residues 260-265 (RYGYKL) are cytoplasmic. Residues 266 to 285 (ISLLWAVVLMISIHSYQNYI) form a helical membrane-spanning segment. The Periplasmic portion of the chain corresponds to 286–294 (PIYPGYTTQ). Residues 295–317 (LTITSSSYLVFSFIVNYMAVLAT) traverse the membrane as a helical segment. Residues 318-747 (RQRAVVRRIQ…NEIEPIRESA (430 aa)) are Cytoplasmic-facing. The EAL domain maps to 493–744 (KVAMMNRLQQ…DTLNEIEPIR (252 aa)).

The cofactor is Mg(2+). Mn(2+) is required as a cofactor.

The protein localises to the cell inner membrane. The enzyme catalyses 3',3'-c-di-GMP + H2O = 5'-phosphoguanylyl(3'-&gt;5')guanosine + H(+). Inhibited by pGpG. Its function is as follows. Phosphodiesterase (PDE) that catalyzes the hydrolysis of cyclic-di-GMP (c-di-GMP) to 5'-pGpG. Truncated proteins consisting of the GGDEF/EAL domains (residues 319-747) or of the EAL domain alone (481-747) have c-di-GMP phosphodiesterase activity. They do not have diguanylate cyclase activity. Cyclic-di-GMP is a second messenger which controls cell surface-associated traits in bacteria. The polypeptide is Cyclic di-GMP phosphodiesterase PdeF (Escherichia coli (strain K12)).